The following is a 280-amino-acid chain: Chaperone protein DnaJ 2 (280 aa).

The J domain occupies 6-70; it reads DYYAILGVPR…EKRRIYDTYG (65 aa).

It belongs to the DnaJ family. Forms a heterononamer with DnaJ and DafA in the resting state. Three copies of each protein are present in the complex.

The protein localises to the cytoplasm. Does not influence ATP binding or hydrolysis nor ADP release. Exerts influence on the interaction of DnaK with substrates; in the presence of DafA, DnaJ inhibits substrate binding, and substrate already bound to DnaK is displaced by DnaJ and DafA. The sequence is that of Chaperone protein DnaJ 2 (dnaJ2) from Thermus thermophilus (strain ATCC 27634 / DSM 579 / HB8).